The chain runs to 79 residues: Small ribosomal subunit protein uS17 (79 aa).

Belongs to the universal ribosomal protein uS17 family. As to quaternary structure, part of the 30S ribosomal subunit.

In terms of biological role, one of the primary rRNA binding proteins, it binds specifically to the 5'-end of 16S ribosomal RNA. This Paramagnetospirillum magneticum (strain ATCC 700264 / AMB-1) (Magnetospirillum magneticum) protein is Small ribosomal subunit protein uS17.